A 529-amino-acid chain; its full sequence is DEP domain-containing protein 1B (529 aa).

Residues 24 to 108 (FRAGMPLRKH…DDGHLYRFPP (85 aa)) enclose the DEP domain. One can recognise a Rho-GAP domain in the interval 192–393 (ARLQKVLGLD…FLMDNYQEIL (202 aa)).

The protein is DEP domain-containing protein 1B (DEPDC1B) of Gallus gallus (Chicken).